Here is a 433-residue protein sequence, read N- to C-terminus: G-protein coupled receptor 22 (433 aa).

The Extracellular portion of the chain corresponds to 1–45 (MCFSPILEINMQSESNITVRDDIDDINTNMYQPLSYPLSFQVSLT). An N-linked (GlcNAc...) asparagine glycan is attached at Asn-16. A helical membrane pass occupies residues 46-66 (GFLMLEIVLGLGSNLTVLVLY). The Cytoplasmic portion of the chain corresponds to 67–85 (CMKSNLINSVSNIITMNLH). Residues 86–106 (VLDVIICVGCIPLTIVILLLS) traverse the membrane as a helical segment. At 107-115 (LESNTALIC) the chain is on the extracellular side. Residues 116 to 136 (CFHEACVSFASVSTAINVFAI) traverse the membrane as a helical segment. At 137–156 (TLDRYDISVKPANRILTMGR) the chain is on the cytoplasmic side. Residues 157–177 (AVMLMISIWIFSFFSFLIPFI) form a helical membrane-spanning segment. At 178–208 (EVNFFSLQSGNTWENKTLLCVSTNEYYTELG) the chain is on the extracellular side. N-linked (GlcNAc...) asparagine glycosylation occurs at Asn-192. A helical transmembrane segment spans residues 209 to 229 (MYYHLLVQIPIFFFTVVVMLI). Residues 230-315 (TYTKILQALN…ERQKRVFRMS (86 aa)) lie on the Cytoplasmic side of the membrane. A helical membrane pass occupies residues 316–336 (LLIISTFLLCWTPISVLNTTI). Residues 337–349 (LCLGPSDLLVKLR) lie on the Extracellular side of the membrane. The helical transmembrane segment at 350–370 (LCFLVMAYGTTIFHPLLYAFT) threads the bilayer. At 371 to 433 (RQKFQKVLKS…KCLVPQVVTD (63 aa)) the chain is on the cytoplasmic side.

Belongs to the G-protein coupled receptor 1 family. High expression in adult and fetal heart tissue. Expressed in the brain, with enrichment in the accumbens, amygdala, cerebellum, cortex, and hippocampus regions.

Its subcellular location is the cell membrane. Functionally, orphan G-protein coupled receptor. Seems to act through a G(i)/G(o) mediated pathway. May be involved in ciliogenesis. This is G-protein coupled receptor 22 from Homo sapiens (Human).